Reading from the N-terminus, the 316-residue chain is Beta-ketoacyl-[acyl-carrier-protein] synthase III (316 aa).

Residues C112 and H243 contribute to the active site. Positions 244–248 (QANLR) are ACP-binding. The active site involves N273.

Belongs to the thiolase-like superfamily. FabH family. In terms of assembly, homodimer.

Its subcellular location is the cytoplasm. It carries out the reaction malonyl-[ACP] + acetyl-CoA + H(+) = 3-oxobutanoyl-[ACP] + CO2 + CoA. It participates in lipid metabolism; fatty acid biosynthesis. Catalyzes the condensation reaction of fatty acid synthesis by the addition to an acyl acceptor of two carbons from malonyl-ACP. Catalyzes the first condensation reaction which initiates fatty acid synthesis and may therefore play a role in governing the total rate of fatty acid production. Possesses both acetoacetyl-ACP synthase and acetyl transacylase activities. Its substrate specificity determines the biosynthesis of branched-chain and/or straight-chain of fatty acids. This Yersinia pseudotuberculosis serotype O:1b (strain IP 31758) protein is Beta-ketoacyl-[acyl-carrier-protein] synthase III.